The primary structure comprises 137 residues: Large ribosomal subunit protein uL16c (137 aa).

The disordered stretch occupies residues 1–21 (MLSPKKTKYRKQHRGRMKGKA).

The protein belongs to the universal ribosomal protein uL16 family. As to quaternary structure, part of the 50S ribosomal subunit.

The protein resides in the plastid. It localises to the chloroplast. The chain is Large ribosomal subunit protein uL16c from Oedogonium cardiacum (Filamentous green alga).